A 61-amino-acid chain; its full sequence is Conotoxin Tx-D021 (61 aa).

The signal sequence occupies residues methionine 1–alanine 22. The propeptide occupies arginine 23–aspartate 48. Cysteine amide is present on cysteine 60.

The protein belongs to the conotoxin T superfamily. In terms of processing, contains 2 disulfide bonds that can be either 'C1-C3, C2-C4' or 'C1-C4, C2-C3', since these disulfide connectivities have been observed for conotoxins with cysteine framework V (for examples, see AC P0DQQ7 and AC P81755). In terms of tissue distribution, expressed by the venom duct.

It is found in the secreted. This Conus textile (Cloth-of-gold cone) protein is Conotoxin Tx-D021.